The following is a 306-amino-acid chain: MAAALVSVPRIKLGSQGLEVSAQGLGCMGMSAFYGPPKPESEMIKLIHHAVDAGVTFLDTSDVYGPHTNEVLLGKALQGGVREKVELATKFGVSFADGKREIHGDPAYVRTACEGSFKRLGVDCIDLYYQHRIDKRVPIEVTIGELKKLVEEGKIKYIGLSEASASTIRRAHAVHPITAVQLEWSLWSRDAEEDIIPTCRELGIGIVAYSPLGRGFFSSGAKLVDSLSEQDFRKHMPRFQPENLDKNAQIFERVRRDGSTERMHAITARVGLGSPPRKRRLPHTWHNKNRQLQPERGGTVCEAYTG.

The Proton donor role is filled by tyrosine 64. Histidine 131 is a substrate binding site. An NADP(+)-binding site is contributed by 210 to 220; it reads SPLGRGFFSSG. Positions 272-306 are disordered; sequence LGSPPRKRRLPHTWHNKNRQLQPERGGTVCEAYTG. Residues 276–289 show a composition bias toward basic residues; the sequence is PRKRRLPHTWHNKN.

Belongs to the aldo/keto reductase family. Aldo/keto reductase 2 subfamily. In terms of tissue distribution, leaves and roots.

This Zea mays (Maize) protein is IN2-2 protein (IN2-2).